Consider the following 502-residue polypeptide: Alpha-ketoglutarate-dependent dioxygenase FTO (502 aa).

The fe2OG dioxygenase domain stretch occupies residues 32-324 (TPKDDEFYQQ…SSTHRVAECS (293 aa)). Substrate is bound by residues R96 and Y108. N202 provides a ligand contact to 2-oxoglutarate. The tract at residues 210–221 (PYLKEEPYFGMG) is loop L1; predicted to block binding of double-stranded DNA or RNA. At K213 the chain carries N6-acetyllysine. Residues H228 and D230 each coordinate Fe cation. 228–231 (HHDE) is a binding site for substrate. Y292 provides a ligand contact to 2-oxoglutarate. H304 is a binding site for Fe cation. Residues 313-315 (RFS), T317, and R319 each bind 2-oxoglutarate.

This sequence belongs to the fto family. In terms of assembly, monomer. May also exist as homodimer. The cofactor is Fe(2+). As to expression, ubiquitous. Detected in brain, brain cortex, hypothalamus, cerebellum, liver, pancreas, heart, kidney, white adipose tissue and skeletal muscle. Most abundant in the brain, particularly in hypothalamic nuclei governing energy balance.

The protein localises to the nucleus. It is found in the nucleus speckle. The protein resides in the cytoplasm. The catalysed reaction is a 5'-end (N(7)-methyl 5'-triphosphoguanosine)-(N(6),2'-O-dimethyladenosine) in mRNA + 2-oxoglutarate + O2 = a 5'-end (N(7)-methyl 5'-triphosphoguanosine)-(2'-O-methyladenosine) in mRNA + formaldehyde + succinate + CO2. It carries out the reaction an N(6)-methyladenosine in mRNA + 2-oxoglutarate + O2 = an adenosine in mRNA + formaldehyde + succinate + CO2. The enzyme catalyses N(6)-methyladenosine in U6 snRNA + 2-oxoglutarate + O2 = adenosine in U6 snRNA + formaldehyde + succinate + CO2. It catalyses the reaction a 5'-end (N(7)-methyl 5'-triphosphoguanosine)-(N(6),2'-O-dimethyladenosine) in U6 snRNA + 2-oxoglutarate + O2 = a 5'-end (N(7)-methyl 5'-triphosphoguanosine)-(2'-O-methyladenosine) in U6 snRNA + formaldehyde + succinate + CO2. The catalysed reaction is an N(1)-methyladenosine in tRNA + 2-oxoglutarate + O2 = an adenosine in tRNA + formaldehyde + succinate + CO2. Activated by ascorbate. Inhibited by N-oxalylglycine, fumarate and succinate. Its function is as follows. RNA demethylase that mediates oxidative demethylation of different RNA species, such as mRNAs, tRNAs and snRNAs, and acts as a regulator of fat mass, adipogenesis and energy homeostasis. Specifically demethylates N(6)-methyladenosine (m6A) RNA, the most prevalent internal modification of messenger RNA (mRNA) in higher eukaryotes. M6A demethylation by FTO affects mRNA expression and stability. Also able to demethylate m6A in U6 small nuclear RNA (snRNA). Mediates demethylation of N(6),2'-O-dimethyladenosine cap (m6A(m)), by demethylating the N(6)-methyladenosine at the second transcribed position of mRNAs and U6 snRNA. Demethylation of m6A(m) in the 5'-cap by FTO affects mRNA stability by promoting susceptibility to decapping. Also acts as a tRNA demethylase by removing N(1)-methyladenine from various tRNAs. Has no activity towards 1-methylguanine. Has no detectable activity towards double-stranded DNA. Also able to repair alkylated DNA and RNA by oxidative demethylation: demethylates single-stranded RNA containing 3-methyluracil, single-stranded DNA containing 3-methylthymine and has low demethylase activity towards single-stranded DNA containing 1-methyladenine or 3-methylcytosine. Ability to repair alkylated DNA and RNA is however unsure in vivo. Involved in the regulation of fat mass, adipogenesis and body weight, thereby contributing to the regulation of body size and body fat accumulation. Involved in the regulation of thermogenesis and the control of adipocyte differentiation into brown or white fat cells. Regulates activity of the dopaminergic midbrain circuitry via its ability to demethylate m6A in mRNAs. This is Alpha-ketoglutarate-dependent dioxygenase FTO from Mus musculus (Mouse).